A 282-amino-acid polypeptide reads, in one-letter code: Fused uL13/uS9 ribosomal subunit protein (282 aa).

Residues 1–141 (MLLMIINGEG…LGEISELLGA (141 aa)) are large ribosomal subunit protein uL13. The small ribosomal subunit protein uS9 stretch occupies residues 150–282 (MKKVIHTSGK…ARARRQKSYR (133 aa)). The disordered stretch occupies residues 259-282 (DPRRSEPKKYGGRGARARRQKSYR). The span at 273 to 282 (ARARRQKSYR) shows a compositional bias: basic residues.

In the N-terminal section; belongs to the universal ribosomal protein uL13 family. This sequence in the C-terminal section; belongs to the universal ribosomal protein uS9 family. As to quaternary structure, L13 is part of the 50S ribosomal subunit. S9 is part of the 30S ribosomal subunit.

L13 protein is one of the early assembly proteins of the 50S ribosomal subunit, although it is not seen to bind rRNA by itself. It is important during the early stages of 50S assembly. This chain is Fused uL13/uS9 ribosomal subunit protein (rpl13/rps9), found in Methanothermobacter thermautotrophicus (strain ATCC 29096 / DSM 1053 / JCM 10044 / NBRC 100330 / Delta H) (Methanobacterium thermoautotrophicum).